Consider the following 184-residue polypeptide: UPF0149 protein PA14_69010 (184 aa).

The protein belongs to the UPF0149 family.

This Pseudomonas aeruginosa (strain UCBPP-PA14) protein is UPF0149 protein PA14_69010.